A 298-amino-acid chain; its full sequence is Putative glycylpeptide N-tetradecanoyltransferase (298 aa).

It belongs to the NMT family.

The enzyme catalyses N-terminal glycyl-[protein] + tetradecanoyl-CoA = N-tetradecanoylglycyl-[protein] + CoA + H(+). Its function is as follows. Adds a myristoyl group to the N-terminal glycine residue of certain proteins. The sequence is that of Putative glycylpeptide N-tetradecanoyltransferase from Melanoplus sanguinipes (Migratory grasshopper).